A 125-amino-acid chain; its full sequence is Prefoldin subunit beta (125 aa).

Belongs to the prefoldin subunit beta family. Heterohexamer of two alpha and four beta subunits.

Its subcellular location is the cytoplasm. Functionally, molecular chaperone capable of stabilizing a range of proteins. Seems to fulfill an ATP-independent, HSP70-like function in archaeal de novo protein folding. The sequence is that of Prefoldin subunit beta from Pyrobaculum calidifontis (strain DSM 21063 / JCM 11548 / VA1).